A 261-amino-acid polypeptide reads, in one-letter code: Cytochrome c oxidase subunit 3 (261 aa).

The Mitochondrial matrix segment spans residues 1 to 15 (MTHQTHAYHMVNPSP). The helical transmembrane segment at 16–34 (WPLTGALSALLMTSGLIMW) threads the bilayer. Residues 35-40 (FHFNST) are Mitochondrial intermembrane-facing. Residues 41-66 (TLLTLGLTTNMLTMYQWWRDVIREST) traverse the membrane as a helical segment. Over 67-72 (FQGHHT) the chain is Mitochondrial matrix. Residues 73-105 (PTVQKGLRYGMILFIISEVLFFTGFFWAFYHSS) form a helical membrane-spanning segment. The Mitochondrial intermembrane portion of the chain corresponds to 106-128 (LAPTPELGGCWPPTGIHPLNPLE). A helical membrane pass occupies residues 129–152 (VPLLNTSVLLASGVSITWAHHSLM). Residues 153–155 (EGN) are Mitochondrial matrix-facing. A helical transmembrane segment spans residues 156–183 (RNPMLQALFITIALGIYFTLLQASEYYE). At 184-190 (APFTISD) the chain is on the mitochondrial intermembrane side. A helical membrane pass occupies residues 191 to 223 (GVYGSTFFVATGFHGLHVIIGSTFLIVCFFRQL). The Mitochondrial matrix portion of the chain corresponds to 224–232 (KFHFTSNHH). A helical transmembrane segment spans residues 233-256 (FGFEAAAWYWHFVDVVWLFLYVSI). At 257–261 (YWWGS) the chain is on the mitochondrial intermembrane side.

The protein belongs to the cytochrome c oxidase subunit 3 family. Component of the cytochrome c oxidase (complex IV, CIV), a multisubunit enzyme composed of 14 subunits. The complex is composed of a catalytic core of 3 subunits MT-CO1, MT-CO2 and MT-CO3, encoded in the mitochondrial DNA, and 11 supernumerary subunits COX4I, COX5A, COX5B, COX6A, COX6B, COX6C, COX7A, COX7B, COX7C, COX8 and NDUFA4, which are encoded in the nuclear genome. The complex exists as a monomer or a dimer and forms supercomplexes (SCs) in the inner mitochondrial membrane with NADH-ubiquinone oxidoreductase (complex I, CI) and ubiquinol-cytochrome c oxidoreductase (cytochrome b-c1 complex, complex III, CIII), resulting in different assemblies (supercomplex SCI(1)III(2)IV(1) and megacomplex MCI(2)III(2)IV(2)).

The protein resides in the mitochondrion inner membrane. It catalyses the reaction 4 Fe(II)-[cytochrome c] + O2 + 8 H(+)(in) = 4 Fe(III)-[cytochrome c] + 2 H2O + 4 H(+)(out). Its function is as follows. Component of the cytochrome c oxidase, the last enzyme in the mitochondrial electron transport chain which drives oxidative phosphorylation. The respiratory chain contains 3 multisubunit complexes succinate dehydrogenase (complex II, CII), ubiquinol-cytochrome c oxidoreductase (cytochrome b-c1 complex, complex III, CIII) and cytochrome c oxidase (complex IV, CIV), that cooperate to transfer electrons derived from NADH and succinate to molecular oxygen, creating an electrochemical gradient over the inner membrane that drives transmembrane transport and the ATP synthase. Cytochrome c oxidase is the component of the respiratory chain that catalyzes the reduction of oxygen to water. Electrons originating from reduced cytochrome c in the intermembrane space (IMS) are transferred via the dinuclear copper A center (CU(A)) of subunit 2 and heme A of subunit 1 to the active site in subunit 1, a binuclear center (BNC) formed by heme A3 and copper B (CU(B)). The BNC reduces molecular oxygen to 2 water molecules using 4 electrons from cytochrome c in the IMS and 4 protons from the mitochondrial matrix. The polypeptide is Cytochrome c oxidase subunit 3 (MT-CO3) (Madoqua guentheri (Guenther's dik-dik)).